Here is a 571-residue protein sequence, read N- to C-terminus: E3 ubiquitin-protein ligase ipaH3 (571 aa).

Residues 1 to 260 (MSIMLPINNN…SQQTAQPDYH (260 aa)) are interaction with target proteins. LRR repeat units follow at residues 58-81 (INQFSELQLNRLNLSSLPDNLPPQ), 83-99 (TVLEITQNALISLPELP), 100-119 (ASLEYLDACDNRLSTLPELP), 120-144 (ASLKHLDVDNNQLTMLPELPALLEY), 146-159 (NADNNQLTMLPELP), 160-184 (TSLEVLSVRNNQLTFLPELPESLEA), 186-202 (DVSTNLLESLPAVPVRN), 205-229 (SEETEIFFRCRENRITHIPENILSL), and 232-260 (TCTIILEDNPLSSRIRESLSQQTAQPDYH). The interval 269–278 (SDGQQNTLHR) is linker. The 293-residue stretch at 279–571 (PLADAVTAWF…SENGSQLHHS (293 aa)) folds into the NEL domain. The tract at residues 279–571 (PLADAVTAWF…SENGSQLHHS (293 aa)) is E3 ubiquitin-protein ligase catalytic domain. The Glycyl thioester intermediate role is filled by Cys-363.

This sequence belongs to the LRR-containing bacterial E3 ligase family. Post-translationally, ubiquitinated in the presence of host E1 ubiquitin-activating enzyme, E2 ubiquitin-conjugating enzyme UBE2D3 and ubiquitin.

Its subcellular location is the secreted. The protein localises to the host cytoplasm. The catalysed reaction is S-ubiquitinyl-[E2 ubiquitin-conjugating enzyme]-L-cysteine + [acceptor protein]-L-lysine = [E2 ubiquitin-conjugating enzyme]-L-cysteine + N(6)-ubiquitinyl-[acceptor protein]-L-lysine.. Functionally, effector proteins function to alter host cell physiology and promote bacterial survival in host tissues. This protein is an E3 ubiquitin ligase that interferes with host's ubiquitination pathway. Synthesizes a 'Lys-48'-linked ubiquitin chain, which requires non-covalent binding between ubiquitin and the host ubiquitin-conjugating enzyme UBE2D1. This Shigella flexneri protein is E3 ubiquitin-protein ligase ipaH3 (ipaH3).